The primary structure comprises 602 residues: MSRHMRAPRFDPRAGFHAEGKDRGPSVPQGLLKAARSSGQLNLAGRNLGEVPQCVWRINVDIPEEANQNLSFSSTERWWDQTDLTKLIISSNKLQSLSDDLRLLPALTVLDIHDNQLTSLPSAIRELDNLQKLNVSHNKLKILPEEITSLKNLRTLHLQHNELTCIPEGFEHLSCLEDLDLSSNRLATVPADFALLSSLLRLNLSSNQLKNLPAEISRMKRLKHLDCDANLLETVPPDVGSMESLELLYLRRNKLRVLPEFPSCRQLKELHLAENQIEKLGAEHLQHLQAILVLDLRGNKLRSVPEEMALLQSLERLDLSNNDISSLPCSLGNLHLKFLALEGNPLRTIRREIIAKGTQEVLKYLRSKIKDDRTNQNDSVPETAMTLPSEARVNIHAIATLKLLDYSDKQATLIPDDLFDATKTTLITSINFSKNQLCEIPQRIVELKEMVLDINLSFNKLSFISHELCLLQKLTFLDLRNNFLSSLPEEMSSLTKLQTINLSFNRFKVFPEVLYRISTLEAVLISNNQVGSVDPQKMKLMENLNTLDLQNNDLLQIPPELGNCVQLRTLLLDGNPFRVPRAAILMKGTAAVLEYLRDRIPA.

The disordered stretch occupies residues 1-26 (MSRHMRAPRFDPRAGFHAEGKDRGPS). The span at 8-24 (PRFDPRAGFHAEGKDRG) shows a compositional bias: basic and acidic residues. The stretch at 35-58 (ARSSGQLNLAGRNLGEVPQCVWRI) is one LRR 1 repeat. Residue serine 71 is modified to Phosphoserine. LRR repeat units lie at residues 81–103 (QTDL…DLRL), 104–126 (LPAL…AIRE), 127–149 (LDNL…EITS), 150–172 (LKNL…GFEH), 174–195 (SCLE…DFAL), 196–219 (LSSL…ISRM), 221–241 (RLKH…DVGS), 242–266 (MESL…SCRQ), 268–287 (KELH…HLQH), 288–310 (LQAI…EMAL), 311–334 (LQSL…LGNL), 336–356 (LKFL…IIAK), 398–421 (IATL…LFDA), 424–447 (TTLI…IVEL), 449–470 (EMVL…ELCL), 471–494 (LQKL…MSSL), 496–517 (KLQT…LYRI), 519–540 (TLEA…KMKL), 541–564 (MENL…LGNC), and 566–587 (QLRT…ILMK).

The sequence is that of Leucine-rich repeat-containing protein 40 (Lrrc40) from Mus musculus (Mouse).